A 372-amino-acid polypeptide reads, in one-letter code: Enoyl-[acyl-carrier-protein] reductase, mitochondrial (372 aa).

The transit peptide at 1–18 directs the protein to the mitochondrion; it reads MSFFKTAVRRFSSTSITR. Catalysis depends on Y72, which acts as the Proton donor. NADP(+)-binding positions include N157, 183–186, 206–208, 279–282, 304–306, and K365; these read NSMV, RNR, FGGM, and FWV.

It belongs to the zinc-containing alcohol dehydrogenase family. Quinone oxidoreductase subfamily. Homodimer.

It is found in the mitochondrion matrix. The catalysed reaction is a 2,3-saturated acyl-[ACP] + NADP(+) = a (2E)-enoyl-[ACP] + NADPH + H(+). Its function is as follows. Catalyzes the NADPH-dependent reduction of trans-2-enoyl thioesters in mitochondrial fatty acid synthesis (fatty acid synthesis type II). Fatty acid chain elongation in mitochondria uses acyl carrier protein (ACP) as an acyl group carrier, but the enzyme accepts both ACP and CoA thioesters as substrates in vitro. Required for respiration and the maintenance of the mitochondrial compartment. This is Enoyl-[acyl-carrier-protein] reductase, mitochondrial (etr1) from Schizosaccharomyces pombe (strain 972 / ATCC 24843) (Fission yeast).